We begin with the raw amino-acid sequence, 2813 residues long: von Willebrand factor (2813 aa).

A signal peptide spans 1–22; the sequence is MIPARFAGVLLALALILPGTLC. The 169-residue stretch at 33–201 folds into the VWFD 1 domain; the sequence is ARCSLFGSDF…ALSSGEQWCE (169 aa). 2 disulfides stabilise this stretch: Cys35-Cys162 and Cys57-Cys200. N-linked (GlcNAc...) asparagine glycans are attached at residues Asn99, Asn156, and Asn211. Positions 295–348 constitute a TIL 1 domain; the sequence is CPAGMEYRQCVSPCARTCQSLHINEMCQERCVDGCSCPEGQLLDEGLCVESTEC. The region spanning 386-560 is the VWFD 2 domain; sequence GECLVTGQSH…NAWKLHGDCQ (175 aa). Intrachain disulfides connect Cys388-Cys524, Cys410-Cys559, and Cys432-Cys440. TIL domains lie at 652–707 and 776–827; these read CPKG…KAQC and CPAD…LERC. Asn666 carries N-linked (GlcNAc...) asparagine glycosylation. Residues 764–787 form an amino-terminal region; sequence SLSCRPPMVKLVCPADNLRAEGLE. Cystine bridges form between Cys767–Cys808, Cys776–Cys804, and Cys810–Cys821. The interval 788–833 is E1; that stretch reads CTKTCQNYDLECMSMGCVSGCLCPPGMVRHENRCVALERCPCFHQG. Positions 826-853 are CX; it reads RCPCFHQGKEYAPGETVKIGCNTCVCQD. The N-linked (GlcNAc...) asparagine glycan is linked to Asn857. One can recognise a VWFD 3 domain in the interval 865–1032; the sequence is ATCSTIGMAH…NSWKVSSQCA (168 aa). Intrachain disulfides connect Cys867–Cys996, Cys889–Cys1031, Cys898–Cys993, Cys914–Cys921, Cys1060–Cys1084, Cys1071–Cys1111, Cys1089–Cys1091, and Cys1126–Cys1130. In terms of domain architecture, TIL 4 spans 1146-1196; the sequence is YNSCAPACQVTCQHPEPLACPVQCVEGCHAHCPPGKILDELLQTCVDPEDC. Asn1147 carries N-linked (GlcNAc...) asparagine; atypical glycosylation. Intrachain disulfides connect Cys1149/Cys1169, Cys1153/Cys1165, and Cys1196/Cys1199. The N-linked (GlcNAc...) asparagine glycan is linked to Asn1231. Residues Cys1234 and Cys1237 are joined by a disulfide bond. O-linked (GalNAc...) threonine glycans are attached at residues Thr1248, Thr1255, and Thr1256. Ser1263 carries an O-linked (GalNAc...) serine glycan. Cys1272 and Cys1458 are oxidised to a cystine. Positions 1277–1453 constitute a VWFA 1; binding site for platelet glycoprotein Ib domain; the sequence is DLVFLLDGSS…DELEQQRDEI (177 aa). Residues Thr1468 and Thr1477 are each glycosylated (O-linked (GalNAc...) threonine). Ser1486 is a glycosylation site (O-linked (GalNAc...) serine). O-linked (GalNAc...) threonine glycosylation is present at Thr1487. In terms of domain architecture, VWFA 2 spans 1498-1665; the sequence is DVAFVLEGSD…TLPREAPDLV (168 aa). Asn1515 carries N-linked (GlcNAc...) (complex) asparagine glycosylation. Asn1574 carries N-linked (GlcNAc...) asparagine glycosylation. An intrachain disulfide couples Cys1669 to Cys1670. The O-linked (GalNAc...) threonine glycan is linked to Thr1679. Intrachain disulfides connect Cys1686/Cys1872, Cys1879/Cys1904, Cys1899/Cys1940, Cys1927/Cys2088, Cys1950/Cys2085, Cys1972/Cys2123, and Cys1993/Cys2001. The 181-residue stretch at 1691-1871 folds into the VWFA 3; main binding site for collagens type I and III domain; the sequence is DVILLLDGSS…TLGNSFLHKL (181 aa). In terms of domain architecture, VWFD 4 spans 1948–2124; it reads CVCTGSSTRH…TVQRPGQTCQ (177 aa). The E2 stretch occupies residues 2216-2261; it reads CPRHCDGNVSSCGDHPSEGCFCPPDKVMLEGSCVPEEACTQCIGED. Asn2223 and Asn2290 each carry an N-linked (GlcNAc...) asparagine glycan. Residues 2255–2328 enclose the VWFC 1 domain; sequence TQCIGEDGVQ…CCPEYECVCD (74 aa). The O-linked (GalNAc...) threonine glycan is linked to Thr2298. Asn2357 and Asn2400 each carry an N-linked (GlcNAc...) asparagine glycan. Residues 2429–2495 enclose the VWFC 2 domain; sequence KVCVHRSTIY…HEGECCGRCL (67 aa). Residues 2507-2509 carry the Cell attachment site motif; sequence RGD. Asn2546 and Asn2585 each carry an N-linked (GlcNAc...) asparagine glycan. A VWFC 3 domain is found at 2580–2645; it reads EACMLNGTVI…NTGECCGRCL (66 aa). 4 cysteine pairs are disulfide-bonded: Cys2724–Cys2774, Cys2739–Cys2788, Cys2750–Cys2804, and Cys2754–Cys2806. In terms of domain architecture, CTCK spans 2724–2812; it reads CNDITARLQY…ECKCSPRKCS (89 aa). Asn2790 carries N-linked (GlcNAc...) asparagine glycosylation.

In terms of assembly, multimeric. Interacts with F8. Post-translationally, all cysteine residues are involved in intrachain or interchain disulfide bonds. N- and O-glycosylated. Plasma.

It is found in the secreted. The protein localises to the extracellular space. Its subcellular location is the extracellular matrix. In terms of biological role, important in the maintenance of hemostasis, it promotes adhesion of platelets to the sites of vascular injury by forming a molecular bridge between sub-endothelial collagen matrix and platelet-surface receptor complex GPIb-IX-V. Also acts as a chaperone for coagulation factor VIII, delivering it to the site of injury, stabilizing its heterodimeric structure and protecting it from premature clearance from plasma. This chain is von Willebrand factor (VWF), found in Homo sapiens (Human).